Here is a 447-residue protein sequence, read N- to C-terminus: Argininosuccinate synthase (447 aa).

Residues Ala-17–Ser-25 and Ala-43 contribute to the ATP site. Position 99 (Tyr-99) interacts with L-citrulline. Residues Gly-129 and Thr-131 each contribute to the ATP site. 3 residues coordinate L-aspartate: Thr-131, Asn-135, and Asp-136. Asn-135 provides a ligand contact to L-citrulline. Residue Asp-136 participates in ATP binding. L-citrulline-binding residues include Arg-139 and Ser-192. Asp-194 contacts ATP. Residues Thr-201, Glu-203, and Glu-280 each contribute to the L-citrulline site.

The protein belongs to the argininosuccinate synthase family. Type 2 subfamily. As to quaternary structure, homotetramer.

The protein resides in the cytoplasm. The catalysed reaction is L-citrulline + L-aspartate + ATP = 2-(N(omega)-L-arginino)succinate + AMP + diphosphate + H(+). The protein operates within amino-acid biosynthesis; L-arginine biosynthesis; L-arginine from L-ornithine and carbamoyl phosphate: step 2/3. This chain is Argininosuccinate synthase, found in Klebsiella pneumoniae (strain 342).